The sequence spans 66 residues: MNNSMINPSIVDLLTKVGDRYSLVILTSKRAREIIEGAEPLTKVDSHKPLTIAINEVNEDIVKYEE.

Belongs to the RNA polymerase subunit omega family. The RNAP catalytic core consists of 2 alpha, 1 beta, 1 beta' and 1 omega subunit. When a sigma factor is associated with the core the holoenzyme is formed, which can initiate transcription.

The enzyme catalyses RNA(n) + a ribonucleoside 5'-triphosphate = RNA(n+1) + diphosphate. In terms of biological role, promotes RNA polymerase assembly. Latches the N- and C-terminal regions of the beta' subunit thereby facilitating its interaction with the beta and alpha subunits. The protein is DNA-directed RNA polymerase subunit omega of Clostridium botulinum (strain Eklund 17B / Type B).